Reading from the N-terminus, the 372-residue chain is Protein Wnt-1 (372 aa).

A signal peptide spans 1–29 (MLKSTQVILIFILLISIVESLSWLALGLA). Intrachain disulfides connect C77/C88, C130/C138, and C140/C158. The N-linked (GlcNAc...) asparagine glycan is linked to N87. An N-linked (GlcNAc...) asparagine glycan is attached at N187. 8 disulfide bridges follow: C225–C239, C227–C234, C301–C332, C317–C327, C331–C371, C347–C362, C349–C359, and C354–C355. S231 is lipidated: O-palmitoleoyl serine; by mom-1.

It belongs to the Wnt family. Palmitoleoylation is required for efficient binding to frizzled receptors. Depalmitoleoylation leads to Wnt signaling pathway inhibition. In terms of tissue distribution, expressed in intestine, some head neurons and ventral nerve cord and pharyngeal neurons. Expressed in the tail and weakly expressed in the vulva and body wall muscles. Expressed highly in posterior dorsal and ventral muscle cells.

Its subcellular location is the secreted. The protein localises to the extracellular space. It localises to the extracellular matrix. The protein resides in the cytoplasm. It is found in the cell membrane. Functionally, ligand for members of the frizzled family of seven transmembrane receptors. Probable developmental protein. May be a signaling molecule which affects the development of discrete regions of tissues. Is likely to signal over only few cell diameters. Binds receptor tyrosine kinase cam-1. Together with Wnt ligand cwn-2, regulates the migration of CAN, ALM, BDU and HSN neurons during embryogenesis, the migration of QL and QR neuroblast descendants during larval development, and polarity of ALM neurons. Also acts with the Wnt ligand egl-20 to direct HSN neuron migration. Acts through the Wnt receptor cfz-2 to direct ALM migration. Also plays a role in axon growth and guidance in HSN and male CP neurons. In addition, together with Wnt ligand cwn-2, negatively regulates developmental neurite pruning of AIM neurons probably by acting as a ligand for receptor tyrosine kinase cam-1. Probably by activating the Wnt/Frizzled pathway, may regulate vulva development. May act redundantly with other Wnt ligands such as cwn-2 and mom-2 to control seam cell polarity. The chain is Protein Wnt-1 (cwn-1) from Caenorhabditis elegans.